The sequence spans 598 residues: Probable ATP-dependent RNA helicase DDX52 (598 aa).

Position 15 is an N6-acetyllysine (K15). At S39 the chain carries Phosphoserine. The segment at 59 to 98 (CGGLQTQQELQNEETTEGGLLERSKEPKKKKRKKMTADVP) is disordered. The Q motif signature appears at 166 to 194 (QLDQEYKISPRLLQNILDAGFQVPTPIQM). One can recognise a Helicase ATP-binding domain in the interval 197 to 375 (IPVMLHGREL…KLNLDNIVSV (179 aa)). 210-217 (APTGSGKT) lines the ATP pocket. A DEAD box motif is present at residues 319–322 (DESD). Residues 386–547 (TVEQELLFVG…PVPEYIKGFQ (162 aa)) enclose the Helicase C-terminal domain. The disordered stretch occupies residues 578–598 (AKQKKVAGQNSKKKETLKGKS). Residues 589–598 (KKKETLKGKS) show a composition bias toward basic and acidic residues.

It belongs to the DEAD box helicase family. DDX52/ROK1 subfamily.

It is found in the nucleus. Its subcellular location is the nucleolus. The enzyme catalyses ATP + H2O = ADP + phosphate + H(+). Its function is as follows. Required for efficient ribosome biogenesis. May control cell cycle progression by regulating translation of mRNAs that contain a terminal oligo pyrimidine (TOP) motif in their 5' UTRs, such as GTPBP4. This is Probable ATP-dependent RNA helicase DDX52 (Ddx52) from Rattus norvegicus (Rat).